The chain runs to 251 residues: Coproheme decarboxylase (251 aa).

Fe-coproporphyrin III-binding positions include Arg133, 147–151 (YPMSK), His174, Gln187, and Ser225. The active site involves Tyr147.

The protein belongs to the ChdC family. Type 1 subfamily. The cofactor is Fe-coproporphyrin III.

The enzyme catalyses Fe-coproporphyrin III + 2 H2O2 + 2 H(+) = heme b + 2 CO2 + 4 H2O. It catalyses the reaction Fe-coproporphyrin III + H2O2 + H(+) = harderoheme III + CO2 + 2 H2O. It carries out the reaction harderoheme III + H2O2 + H(+) = heme b + CO2 + 2 H2O. Its pathway is porphyrin-containing compound metabolism; protoheme biosynthesis. Involved in coproporphyrin-dependent heme b biosynthesis. Catalyzes the decarboxylation of Fe-coproporphyrin III (coproheme) to heme b (protoheme IX), the last step of the pathway. The reaction occurs in a stepwise manner with a three-propionate intermediate. The polypeptide is Coproheme decarboxylase (Listeria monocytogenes serotype 4a (strain HCC23)).